A 55-amino-acid chain; its full sequence is Large ribosomal subunit protein bL33 (55 aa).

The protein belongs to the bacterial ribosomal protein bL33 family.

The polypeptide is Large ribosomal subunit protein bL33 (Bordetella avium (strain 197N)).